The primary structure comprises 238 residues: Lactate utilization protein A (238 aa).

This sequence belongs to the LutA/YkgE family.

Is involved in L-lactate degradation and allows cells to grow with lactate as the sole carbon source. The protein is Lactate utilization protein A of Bacillus velezensis (strain DSM 23117 / BGSC 10A6 / LMG 26770 / FZB42) (Bacillus amyloliquefaciens subsp. plantarum).